The following is a 931-amino-acid chain: Ribosome-releasing factor 2, mitochondrial (931 aa).

Residues 63-379 (EKTRNIGIIA…AVNNLLPGPS (317 aa)) form the tr-type G domain. Residues 72–79 (AHIDAGKT), 162–166 (DTPGH), and 216–219 (NKLD) contribute to the GTP site.

This sequence belongs to the TRAFAC class translation factor GTPase superfamily. Classic translation factor GTPase family. EF-G/EF-2 subfamily.

It is found in the mitochondrion. Mitochondrial GTPase that mediates the disassembly of ribosomes from messenger RNA at the termination of mitochondrial protein biosynthesis. Not involved in the GTP-dependent ribosomal translocation step during translation elongation. The polypeptide is Ribosome-releasing factor 2, mitochondrial (mef2) (Talaromyces stipitatus (strain ATCC 10500 / CBS 375.48 / QM 6759 / NRRL 1006) (Penicillium stipitatum)).